We begin with the raw amino-acid sequence, 716 residues long: Fatty acid oxidation complex subunit alpha (716 aa).

Residues 1 to 189 (MIYQSPTIQV…KVGAIDAVVA (189 aa)) form an enoyl-CoA hydratase/isomerase region. Residue Asp-296 participates in substrate binding. The 3-hydroxyacyl-CoA dehydrogenase stretch occupies residues 311–716 (QAVNSAAVLG…AATNGSYYPA (406 aa)). NAD(+) contacts are provided by residues Met-324, Asp-343, 400 to 402 (VVE), Lys-407, and Ser-429. His-450 (for 3-hydroxyacyl-CoA dehydrogenase activity) is an active-site residue. Asn-453 is a binding site for NAD(+). Residues Asn-500 and Tyr-660 each contribute to the substrate site.

In the N-terminal section; belongs to the enoyl-CoA hydratase/isomerase family. The protein in the C-terminal section; belongs to the 3-hydroxyacyl-CoA dehydrogenase family. Heterotetramer of two alpha chains (FadB) and two beta chains (FadA).

The catalysed reaction is a (3S)-3-hydroxyacyl-CoA + NAD(+) = a 3-oxoacyl-CoA + NADH + H(+). It carries out the reaction a (3S)-3-hydroxyacyl-CoA = a (2E)-enoyl-CoA + H2O. The enzyme catalyses a 4-saturated-(3S)-3-hydroxyacyl-CoA = a (3E)-enoyl-CoA + H2O. It catalyses the reaction (3S)-3-hydroxybutanoyl-CoA = (3R)-3-hydroxybutanoyl-CoA. The catalysed reaction is a (3Z)-enoyl-CoA = a 4-saturated (2E)-enoyl-CoA. It carries out the reaction a (3E)-enoyl-CoA = a 4-saturated (2E)-enoyl-CoA. It participates in lipid metabolism; fatty acid beta-oxidation. Its function is as follows. Involved in the aerobic and anaerobic degradation of long-chain fatty acids via beta-oxidation cycle. Catalyzes the formation of 3-oxoacyl-CoA from enoyl-CoA via L-3-hydroxyacyl-CoA. It can also use D-3-hydroxyacyl-CoA and cis-3-enoyl-CoA as substrate. The chain is Fatty acid oxidation complex subunit alpha from Shewanella loihica (strain ATCC BAA-1088 / PV-4).